Consider the following 207-residue polypeptide: MPTKIQIVFYSSYGHIYKMAEAIAAGAREVGDVEVTLLQVPELMPEEVQVKSGIKGYRAAFGSIPYATPEVLAEADAIIFGTPTRFGNMCSQMRNFLDQTGGLWMSGGLIGKVGSVFTSTASQHGGQETTITSFHTTLLHHGMVIVGVPYSEPGLTNMTEISGGTPYGASTLAGADGSRQPSENELQIARFQGKHVATIAKRLANNK.

Positions 5–196 constitute a Flavodoxin-like domain; it reads IQIVFYSSYG…QIARFQGKHV (192 aa). FMN-binding positions include 11 to 16, 84 to 86, 119 to 125, and histidine 140; these read SSYGHI, TRF, and STASQHG. Residue tyrosine 13 coordinates NADP(+).

This sequence belongs to the WrbA family. As to quaternary structure, homodimer. Requires FMN as cofactor.

It catalyses the reaction 1,4-benzoquinone + NADPH + H(+) = hydroquinone + NADP(+). It participates in xenobiotic degradation; 4-nitrophenol degradation. Involved in the degradation of para-nitrophenol (PNP). Catalyzes the reduction of p-benzoquinone to hydroquinone. This chain is p-benzoquinone reductase (pnpB), found in Pseudomonas sp. (strain WBC-3).